Here is a 115-residue protein sequence, read N- to C-terminus: Large ribosomal subunit protein uL22 (115 aa).

This sequence belongs to the universal ribosomal protein uL22 family. Part of the 50S ribosomal subunit.

In terms of biological role, this protein binds specifically to 23S rRNA; its binding is stimulated by other ribosomal proteins, e.g. L4, L17, and L20. It is important during the early stages of 50S assembly. It makes multiple contacts with different domains of the 23S rRNA in the assembled 50S subunit and ribosome. Functionally, the globular domain of the protein is located near the polypeptide exit tunnel on the outside of the subunit, while an extended beta-hairpin is found that lines the wall of the exit tunnel in the center of the 70S ribosome. This is Large ribosomal subunit protein uL22 from Nitrosospira multiformis (strain ATCC 25196 / NCIMB 11849 / C 71).